Reading from the N-terminus, the 181-residue chain is MNTDSLALIKQSIKTIPDYPKAGIMFRDVTSLLEDHTAYQTAMKLLVERYKDSGFTKVVGTESRGFLFGAPLALELGVGFVPVRKPGKLPRETISESYELEYGHDTLEIHVDAIKAGDKVLVIDDLLATGGTIEATVKLIRRLGGDVAHAAFVISLPDLGGEKRLQAMGLEICKLCEFEGD.

The protein belongs to the purine/pyrimidine phosphoribosyltransferase family. Homodimer.

It localises to the cytoplasm. The catalysed reaction is AMP + diphosphate = 5-phospho-alpha-D-ribose 1-diphosphate + adenine. It participates in purine metabolism; AMP biosynthesis via salvage pathway; AMP from adenine: step 1/1. Its function is as follows. Catalyzes a salvage reaction resulting in the formation of AMP, that is energically less costly than de novo synthesis. The chain is Adenine phosphoribosyltransferase from Shewanella amazonensis (strain ATCC BAA-1098 / SB2B).